The chain runs to 613 residues: UvrABC system protein C (613 aa).

In terms of domain architecture, GIY-YIG spans 29-107 (DVAGVYKMLG…IKTLKPKYNI (79 aa)). The 36-residue stretch at 217–252 (KELQRELFDSMRKFSDNLDYESAMVYRDRLQALKSI) folds into the UVR domain.

This sequence belongs to the UvrC family. Interacts with UvrB in an incision complex.

Its subcellular location is the cytoplasm. The UvrABC repair system catalyzes the recognition and processing of DNA lesions. UvrC both incises the 5' and 3' sides of the lesion. The N-terminal half is responsible for the 3' incision and the C-terminal half is responsible for the 5' incision. This chain is UvrABC system protein C, found in Anaplasma marginale (strain St. Maries).